The following is a 149-amino-acid chain: Transcriptional repressor NrdR (149 aa).

The segment at Cys-3 to Cys-34 is a zinc-finger region. One can recognise an ATP-cone domain in the interval Pro-49–Glu-139.

The protein belongs to the NrdR family. Zn(2+) serves as cofactor.

Its function is as follows. Negatively regulates transcription of bacterial ribonucleotide reductase nrd genes and operons by binding to NrdR-boxes. This is Transcriptional repressor NrdR from Vibrio cholerae serotype O1 (strain ATCC 39541 / Classical Ogawa 395 / O395).